A 263-amino-acid chain; its full sequence is 4-hydroxy-tetrahydrodipicolinate reductase (263 aa).

NAD(+) is bound by residues 8 to 13 (GACGKM), aspartate 34, 97 to 99 (GTT), and 123 to 126 (APNF). Histidine 153 serves as the catalytic Proton donor/acceptor. Histidine 154 serves as a coordination point for (S)-2,3,4,5-tetrahydrodipicolinate. Residue lysine 157 is the Proton donor of the active site. Residue 163-164 (GT) participates in (S)-2,3,4,5-tetrahydrodipicolinate binding.

This sequence belongs to the DapB family.

Its subcellular location is the cytoplasm. The catalysed reaction is (S)-2,3,4,5-tetrahydrodipicolinate + NAD(+) + H2O = (2S,4S)-4-hydroxy-2,3,4,5-tetrahydrodipicolinate + NADH + H(+). It catalyses the reaction (S)-2,3,4,5-tetrahydrodipicolinate + NADP(+) + H2O = (2S,4S)-4-hydroxy-2,3,4,5-tetrahydrodipicolinate + NADPH + H(+). The protein operates within amino-acid biosynthesis; L-lysine biosynthesis via DAP pathway; (S)-tetrahydrodipicolinate from L-aspartate: step 4/4. Its function is as follows. Catalyzes the conversion of 4-hydroxy-tetrahydrodipicolinate (HTPA) to tetrahydrodipicolinate. The protein is 4-hydroxy-tetrahydrodipicolinate reductase of Carboxydothermus hydrogenoformans (strain ATCC BAA-161 / DSM 6008 / Z-2901).